The following is a 135-amino-acid chain: Single-stranded DNA-binding protein RIM1, mitochondrial (135 aa).

The N-terminal 17 residues, 1–17 (MFLRTQARFFHATTKKM), are a transit peptide targeting the mitochondrion. The region spanning 19–117 (FSKMSIVGRI…LVQKDINLLK (99 aa)) is the SSB domain.

Homotetramer. Interacts with PIF1.

It localises to the mitochondrion. In terms of biological role, this protein binds preferentially and cooperatively to single-stranded DNA (ssDNS). Involved in mitochondrial DNA replication. Stimulates PIF1 helicase activity. In Saccharomyces cerevisiae (strain ATCC 204508 / S288c) (Baker's yeast), this protein is Single-stranded DNA-binding protein RIM1, mitochondrial (RIM1).